The sequence spans 86 residues: Elongation factor 1-beta (86 aa).

This sequence belongs to the EF-1-beta/EF-1-delta family.

Functionally, promotes the exchange of GDP for GTP in EF-1-alpha/GDP, thus allowing the regeneration of EF-1-alpha/GTP that could then be used to form the ternary complex EF-1-alpha/GTP/AAtRNA. The polypeptide is Elongation factor 1-beta (Methanocorpusculum labreanum (strain ATCC 43576 / DSM 4855 / Z)).